The following is a 205-amino-acid chain: Ribosomal RNA small subunit methyltransferase G (205 aa).

Residues glycine 66, phenylalanine 71, 119 to 120 (IE), and arginine 135 contribute to the S-adenosyl-L-methionine site.

This sequence belongs to the methyltransferase superfamily. RNA methyltransferase RsmG family.

It localises to the cytoplasm. The enzyme catalyses guanosine(527) in 16S rRNA + S-adenosyl-L-methionine = N(7)-methylguanosine(527) in 16S rRNA + S-adenosyl-L-homocysteine. In terms of biological role, specifically methylates the N7 position of guanine in position 527 of 16S rRNA. The chain is Ribosomal RNA small subunit methyltransferase G from Rhizobium rhizogenes (strain K84 / ATCC BAA-868) (Agrobacterium radiobacter).